Here is a 630-residue protein sequence, read N- to C-terminus: SHC-transforming protein 4 (630 aa).

The CH2 stretch occupies residues 1-185; sequence MRERGQDSLA…RQDRHFLQHL (185 aa). Disordered stretches follow at residues 39-80 and 118-150; these read TSLD…QESP and KLQE…QQDL. Positions 125–142 are enriched in low complexity; sequence PGSSGPSSPETSLSRSGT. The PID domain maps to 186–369; it reads LGMGMNYCVR…VHIDSHAEER (184 aa). Residues 370–525 are CH1; it reads EDHEYYNEIP…HIKQQLWSEE (156 aa). Phosphotyrosine is present on tyrosine 424. 2 stretches are compositionally biased toward polar residues: residues 471 to 486 and 502 to 513; these read LQST…SAQP and PGATAQPASSHS. Residues 471–514 are disordered; it reads LQSTPGSAGNQRSAQPLGSPWHCGKAPETVQPGATAQPASSHSL. The region spanning 526–617 is the SH2 domain; sequence CYHGKLSRKA…GSEVSLKQPV (92 aa).

As to quaternary structure, interacts (via PID domain) with phosphorylated MUSK (via NPXY motif); undergoes tyrosine phosphorylation downstream of activated MUSK. Interacts with GRB2; the interaction is dependent of Tyr-424 phosphorylation and increased by EGF. Phosphorylated; the phosphorylation is enhanced by EGF. Phosphorylation at Tyr-424 is required for the interaction with GRB2. In terms of tissue distribution, only expressed in melanomas. Weakly expressed in normal melanocytes and benign nevi. Highly expressed at the transition from radial growth phase to vertical growth phase and metastatic melanomas, when tumor cells acquire migratory competence and invasive potential.

Its subcellular location is the postsynaptic cell membrane. Its function is as follows. Activates both Ras-dependent and Ras-independent migratory pathways in melanomas. Contributes to the early phases of agrin-induced tyrosine phosphorylation of CHRNB1. The polypeptide is SHC-transforming protein 4 (SHC4) (Homo sapiens (Human)).